Here is a 417-residue protein sequence, read N- to C-terminus: Leucine-rich repeat-containing protein 42 (417 aa).

LRR repeat units lie at residues 167–188 (CLRS…LEHL), 195–215 (SLTE…RKMT), 227–249 (ALKV…FLFG), and 252–273 (LLQF…VKKI). The disordered stretch occupies residues 360–399 (FFRPEEQKDSDSSKSDKRQRSTKRTGADPGQEDCTIAPAT). Residues 362 to 378 (RPEEQKDSDSSKSDKRQ) are compositionally biased toward basic and acidic residues.

Belongs to the LRRC42 family.

The protein is Leucine-rich repeat-containing protein 42 (lrrc42) of Xenopus tropicalis (Western clawed frog).